We begin with the raw amino-acid sequence, 440 residues long: Chorismate synthase 1, chloroplastic (440 aa).

The N-terminal 54 residues, 1–54 (MASFVPTKQFVGASSSSDIGSSRLVSLQLPSKFSSSNFHLPSRPSQLKRLEIQA), are a transit peptide targeting the chloroplast. Residues 100–147 (RRRPGQSRITTPRKETDTCKISSGTADGLTTGSPIKVEVPNTDQRGND) are disordered. Residues 118 to 132 (CKISSGTADGLTTGS) are compositionally biased toward polar residues.

It belongs to the chorismate synthase family. Homotetramer. The cofactor is FMNH2. As to expression, predominantly expressed in flowers and roots and, to a lesser extent, in stems, leaves, and cotyledons.

It is found in the plastid. It localises to the chloroplast. It carries out the reaction 5-O-(1-carboxyvinyl)-3-phosphoshikimate = chorismate + phosphate. It functions in the pathway metabolic intermediate biosynthesis; chorismate biosynthesis; chorismate from D-erythrose 4-phosphate and phosphoenolpyruvate: step 7/7. Its function is as follows. Catalyzes the last common step of the biosynthesis of aromatic amino acids, produced via the shikimic acid pathway. This is Chorismate synthase 1, chloroplastic (CS1) from Solanum lycopersicum (Tomato).